Reading from the N-terminus, the 508-residue chain is Argininosuccinate lyase (508 aa).

This sequence belongs to the lyase 1 family. Argininosuccinate lyase subfamily.

It localises to the cytoplasm. It catalyses the reaction 2-(N(omega)-L-arginino)succinate = fumarate + L-arginine. It functions in the pathway amino-acid biosynthesis; L-arginine biosynthesis; L-arginine from L-ornithine and carbamoyl phosphate: step 3/3. The sequence is that of Argininosuccinate lyase from Methanopyrus kandleri (strain AV19 / DSM 6324 / JCM 9639 / NBRC 100938).